A 1068-amino-acid chain; its full sequence is Transcription factor PDR1 (1068 aa).

Positions 1-38 (MRGLTPKNGVHIETGPDTESSADSSNFSTGFSGKIRKP) are disordered. Residues 17–31 (DTESSADSSNFSTGF) are compositionally biased toward polar residues. Ser-21 is subject to Phosphoserine. The zn(2)-C6 fungal-type DNA-binding region spans 46–72 (CDNCRKRKIKCNGKFPCASCEIYSCEC). 2 disordered regions span residues 95 to 120 (TVQV…DGPC) and 133 to 166 (KLGG…SESQ). The span at 104 to 114 (SSSTSFSNPQR) shows a compositional bias: polar residues. The segment covering 135–146 (GGRSSGDNSGSD) has biased composition (low complexity). 3 positions are modified to phosphoserine: Ser-930, Ser-942, and Ser-948. The disordered stretch occupies residues 1005 to 1029 (NTNEINNNNNNNNNNKNNINNINNN). A 9aaTAD motif is present at residues 1054 to 1062 (EDLYSILWS).

The protein resides in the nucleus. Positive regulator of proteins involved in permeability. PDR1 and PDR3 jointly control the transcription level of both SNQ2 and PDR5. The protein is Transcription factor PDR1 (PDR1) of Saccharomyces cerevisiae (strain ATCC 204508 / S288c) (Baker's yeast).